Consider the following 336-residue polypeptide: Quinolinate synthase (336 aa).

The iminosuccinate site is built by His-25 and Ser-42. A [4Fe-4S] cluster-binding site is contributed by Cys-86. Iminosuccinate-binding positions include 117–119 (YIN) and Ser-138. Cys-198 provides a ligand contact to [4Fe-4S] cluster. Iminosuccinate is bound by residues 224–226 (HPE) and Thr-241. [4Fe-4S] cluster is bound at residue Cys-288.

This sequence belongs to the quinolinate synthase family. Type 3 subfamily. It depends on [4Fe-4S] cluster as a cofactor.

Its subcellular location is the cytoplasm. It catalyses the reaction iminosuccinate + dihydroxyacetone phosphate = quinolinate + phosphate + 2 H2O + H(+). It participates in cofactor biosynthesis; NAD(+) biosynthesis; quinolinate from iminoaspartate: step 1/1. Functionally, catalyzes the condensation of iminoaspartate with dihydroxyacetone phosphate to form quinolinate. This chain is Quinolinate synthase, found in Helicobacter pylori (strain HPAG1).